The following is a 356-amino-acid chain: MEQAAGEPTRTCLTEDIPKAKRCTVIGGCGFLGQHMVEQLLARGYAVNVFDIRQGFDNPRVQFFLGDLCSQQDLYPALKGVSTVFHCASPPPFNNNKELFYRVNYIGTKNVIETCKEAGVQKLILTSSASVIFEGVDIKNGTEDLPYATKPIDYYTETKILQERAVLGAHDPEKNFLTTAIRPHGIFGPRDPQLVPILIEAAKKGKMKFMIGNGKNLVDFTFVENVVHGHILAAEHLSQDTALGGKAFHITNDEPIPFWTFLSRILTGLNYEAPKYHIPYWLAYYLALLVSLLVMVISPVIQLQPTFTPMRVALAGTFHYYSCEKAKKLMGYRPLVTMDDAVDKTVRSFHHLRKVM.

Methionine 1 is modified (N-acetylmethionine). Tyrosine 155 acts as the Proton acceptor in catalysis. Lysine 159 is a binding site for NAD(+). Residues tryptophan 281–isoleucine 301 form a helical membrane-spanning segment. Positions arginine 353–methionine 356 match the Prevents secretion from ER motif.

The protein belongs to the 3-beta-HSD family. As to quaternary structure, homodimer.

The protein localises to the endoplasmic reticulum membrane. It localises to the lipid droplet. The catalysed reaction is a 3beta-hydroxysteroid-4alpha-carboxylate + NADP(+) = a 3-oxosteroid + CO2 + NADPH. The enzyme catalyses a 3beta-hydroxysteroid-4alpha-carboxylate + NAD(+) = a 3-oxosteroid + CO2 + NADH. It carries out the reaction 4alpha-carboxyzymosterol + NADP(+) = zymosterone + CO2 + NADPH. It catalyses the reaction 4alpha-carboxy-4beta-methyl-5alpha-cholest-8-en-3beta-ol + NADP(+) = 4alpha-methyl-5alpha-cholest-8-en-3-one + CO2 + NADPH. The catalysed reaction is 4alpha-carboxy-5alpha-cholest-8-ene-3beta-ol + NADP(+) = 5alpha-cholest-8-en-3-one + CO2 + NADPH. The enzyme catalyses 4beta-methylzymosterol-4alpha-carboxylate + NADP(+) = 3-dehydro-4-methylzymosterol + CO2 + NADPH. It carries out the reaction 4beta-methylzymosterol-4alpha-carboxylate + NAD(+) = 3-dehydro-4-methylzymosterol + CO2 + NADH. It catalyses the reaction 4alpha-carboxy-5alpha-cholest-8-ene-3beta-ol + NAD(+) = 5alpha-cholest-8-en-3-one + CO2 + NADH. The catalysed reaction is 4alpha-carboxy-4beta-methyl-5alpha-cholest-8-en-3beta-ol + NAD(+) = 4alpha-methyl-5alpha-cholest-8-en-3-one + CO2 + NADH. The enzyme catalyses 4alpha-carboxyzymosterol + NAD(+) = zymosterone + CO2 + NADH. It participates in steroid biosynthesis; zymosterol biosynthesis; zymosterol from lanosterol: step 4/6. Catalyzes the NAD(P)(+)-dependent oxidative decarboxylation of the C4 methyl groups of 4-alpha-carboxysterols in post-squalene cholesterol biosynthesis. Also plays a role in the regulation of the endocytic trafficking of EGFR. The protein is Sterol-4-alpha-carboxylate 3-dehydrogenase, decarboxylating (NSDHL) of Bos taurus (Bovine).